The chain runs to 893 residues: DNA mismatch repair protein MutS (893 aa).

631–638 (GPNMAGKS) provides a ligand contact to ATP. Residues 821–858 (AGRPRVAVRQPQGGRRGASTGQLGLFGMEPAQGGTGVT) are disordered.

The protein belongs to the DNA mismatch repair MutS family.

This protein is involved in the repair of mismatches in DNA. It is possible that it carries out the mismatch recognition step. This protein has a weak ATPase activity. The polypeptide is DNA mismatch repair protein MutS (Myxococcus xanthus (strain DK1622)).